The following is a 590-amino-acid chain: Pentatricopeptide repeat-containing protein At1g63070, mitochondrial (590 aa).

The transit peptide at 1–34 (MMRSVAVIGKKCLHRHTVLLKGNPRTTLCWERSF) directs the protein to the mitochondrion. PPR repeat units lie at residues 74 to 108 (SIVE…GISH), 109 to 143 (NLYT…GYGP), 144 to 178 (SIVT…GYQP), 179 to 213 (DTVT…GCQP), 214 to 248 (DLVT…KIEA), 249 to 283 (DVVI…GIKP), 284 to 318 (DVFT…NINP), 319 to 353 (DLVF…KHCF), 355 to 389 (DVVA…GLVG), 390 to 424 (NTVT…GVHP), 425 to 459 (DIMT…DMKL), 460 to 494 (DIVT…GVKP), 495 to 529 (NVVT…GPLP), and 530 to 564 (NSGT…GFAG).

This sequence belongs to the PPR family. P subfamily.

It is found in the mitochondrion. The polypeptide is Pentatricopeptide repeat-containing protein At1g63070, mitochondrial (Arabidopsis thaliana (Mouse-ear cress)).